Here is a 131-residue protein sequence, read N- to C-terminus: Protein DfrA (131 aa).

It belongs to the RutC family.

In Myxococcus xanthus, this protein is Protein DfrA (dfrA).